Consider the following 66-residue polypeptide: Large ribosomal subunit protein uL29 (66 aa).

The protein belongs to the universal ribosomal protein uL29 family.

This is Large ribosomal subunit protein uL29 from Deinococcus deserti (strain DSM 17065 / CIP 109153 / LMG 22923 / VCD115).